An 83-amino-acid chain; its full sequence is Kappa-theraphotoxin-Cg2b (83 aa).

The N-terminal stretch at 1 to 21 (MKGSAFAIILGLVVLCACSFA) is a signal peptide. Residues 22–53 (EDEQDQFASPNELLRSMFLESRHELIPEVEGR) constitute a propeptide that is removed on maturation. Cystine bridges form between Cys55–Cys69, Cys62–Cys74, and Cys68–Cys78.

This sequence belongs to the neurotoxin 30 (phrixotoxin) family. Expressed by the venom gland.

The protein localises to the secreted. Functionally, probable ion channel inhibitor. In Chilobrachys guangxiensis (Chinese earth tiger tarantula), this protein is Kappa-theraphotoxin-Cg2b.